We begin with the raw amino-acid sequence, 47 residues long: uncharacterized protein (47 aa).

The interval 24-47 (FGPNPIEPPTDIAPDPDSTKTWLI) is disordered.

This is an uncharacterized protein from Mycobacterium tuberculosis (strain ATCC 25618 / H37Rv).